The following is a 283-amino-acid chain: MPELPEVETVRRGLTPAMEGVVIARADVNRPDLRWPFPADMAARLTGKRVERLRRRSKYILMDLDSGETLLVHLGMSGRMLVSGDPLGQFVHSHPAPEKHDHVVFHMANNARITFNDPRRFGAMDLMETASADTHKLLSVLGPEPLGNDFHESHLIEAFKNRNSPVKSVLLDQRIVSGLGNIYVCEALFRAKIHPIRKAGKISGARVATLVPIIREVLAEAIEAGGSSLRDFKQADGELGYFQHSFDVYGREGAPCKGEGCTGQIKRIVQSGRSSFYCAQCQR.

Pro2 (schiff-base intermediate with DNA) is an active-site residue. Glu3 (proton donor) is an active-site residue. Lys58 acts as the Proton donor; for beta-elimination activity in catalysis. Residues His100, Arg119, and Arg162 each contribute to the DNA site. The FPG-type zinc-finger motif lies at 247-283; it reads DVYGREGAPCKGEGCTGQIKRIVQSGRSSFYCAQCQR. Arg273 acts as the Proton donor; for delta-elimination activity in catalysis.

It belongs to the FPG family. As to quaternary structure, monomer. Zn(2+) is required as a cofactor.

The catalysed reaction is Hydrolysis of DNA containing ring-opened 7-methylguanine residues, releasing 2,6-diamino-4-hydroxy-5-(N-methyl)formamidopyrimidine.. It catalyses the reaction 2'-deoxyribonucleotide-(2'-deoxyribose 5'-phosphate)-2'-deoxyribonucleotide-DNA = a 3'-end 2'-deoxyribonucleotide-(2,3-dehydro-2,3-deoxyribose 5'-phosphate)-DNA + a 5'-end 5'-phospho-2'-deoxyribonucleoside-DNA + H(+). Its function is as follows. Involved in base excision repair of DNA damaged by oxidation or by mutagenic agents. Acts as a DNA glycosylase that recognizes and removes damaged bases. Has a preference for oxidized purines, such as 7,8-dihydro-8-oxoguanine (8-oxoG). Has AP (apurinic/apyrimidinic) lyase activity and introduces nicks in the DNA strand. Cleaves the DNA backbone by beta-delta elimination to generate a single-strand break at the site of the removed base with both 3'- and 5'-phosphates. This is Formamidopyrimidine-DNA glycosylase from Roseobacter denitrificans (strain ATCC 33942 / OCh 114) (Erythrobacter sp. (strain OCh 114)).